A 110-amino-acid chain; its full sequence is Large ribosomal subunit protein uL22 (110 aa).

The protein belongs to the universal ribosomal protein uL22 family. As to quaternary structure, part of the 50S ribosomal subunit.

This protein binds specifically to 23S rRNA; its binding is stimulated by other ribosomal proteins, e.g. L4, L17, and L20. It is important during the early stages of 50S assembly. It makes multiple contacts with different domains of the 23S rRNA in the assembled 50S subunit and ribosome. In terms of biological role, the globular domain of the protein is located near the polypeptide exit tunnel on the outside of the subunit, while an extended beta-hairpin is found that lines the wall of the exit tunnel in the center of the 70S ribosome. The protein is Large ribosomal subunit protein uL22 of Alkaliphilus oremlandii (strain OhILAs) (Clostridium oremlandii (strain OhILAs)).